The following is a 1637-amino-acid chain: Glutamate rich 3 (1637 aa).

6 disordered regions span residues 145 to 192, 408 to 453, 478 to 814, 1111 to 1194, 1238 to 1445, and 1457 to 1637; these read PLTL…GSLL, PSST…KESC, EWKG…QDAG, VGTS…SPRE, IEKV…SGER, and KAEN…RETA. The segment covering 169–185 has biased composition (polar residues); the sequence is LLSSRQTRNGSKITSGS. 3 stretches are compositionally biased toward basic and acidic residues: residues 416–426, 443–452, and 478–487; these read EKITEKKEEPP, KRNEMERKES, and EWKGKSGRDV. Over residues 500–523 the composition is skewed to acidic residues; the sequence is YEEDFEVDDEKQDEKVDEDEDQAD. Basic and acidic residues predominate over residues 534-557; the sequence is TESEKDNRNPEKKIETSSEKAHDS. Residues 558-572 are compositionally biased toward acidic residues; that stretch reads ENEDTGCSDSEEDDR. Low complexity-rich tracts occupy residues 579-590 and 608-617; these read SSISSRSHPYSS and EEGSSRSSSS. 8 stretches are compositionally biased toward basic and acidic residues: residues 619 to 638, 677 to 693, 769 to 802, 1115 to 1130, 1264 to 1307, 1319 to 1329, 1342 to 1357, and 1402 to 1412; these read DLRENDDPGKPHFPIEKYLE, ESEHKEPRRVASSEVRA, QEMHTLKEEAMKKDESSQPEDTDAHAGVREESGM, EVKEAEREVGSPKTDG, LKTE…KDVE, KLLEDPPKERA, SPKESEATATEHKGGE, and RCEEWAAKELD. Residues 1476–1487 are compositionally biased toward polar residues; sequence VTGSLTGQNWNM. Basic and acidic residues-rich tracts occupy residues 1550–1568, 1589–1599, and 1614–1637; these read AEERTGTEDMAPRTEKVAV, AQDREGGETKA, and GKDEEHQSGAAEEFRESVSQRETA.

It is found in the cell projection. The protein localises to the cilium. Its subcellular location is the cytoplasm. Its function is as follows. Component of the primary cilium that controls cilium formation and length. May function within retrograde intraflagellar transport (IFT)-associated pathways to remove signaling proteins from primary cilia. Also involved in neuronal vesicle biogenesis and neurotransmitter vesicular function. The sequence is that of Glutamate rich 3 from Mus musculus (Mouse).